A 163-amino-acid chain; its full sequence is ATP synthase subunit b, sodium ion specific (163 aa).

The chain crosses the membrane as a helical span at residues 9 to 29 (VSIDINMFWQIINFLILMFFF).

This sequence belongs to the ATPase B chain family. As to quaternary structure, F-type ATPases have 2 components, F(1) - the catalytic core - and F(0) - the membrane proton channel. F(1) has five subunits: alpha(3), beta(3), gamma(1), delta(1), epsilon(1). F(0) has three main subunits: a(1), b(2) and c(10-14). The alpha and beta chains form an alternating ring which encloses part of the gamma chain. F(1) is attached to F(0) by a central stalk formed by the gamma and epsilon chains, while a peripheral stalk is formed by the delta and b chains.

The protein localises to the cell inner membrane. In terms of biological role, f(1)F(0) ATP synthase produces ATP from ADP in the presence of a proton or sodium gradient. F-type ATPases consist of two structural domains, F(1) containing the extramembraneous catalytic core and F(0) containing the membrane proton channel, linked together by a central stalk and a peripheral stalk. During catalysis, ATP synthesis in the catalytic domain of F(1) is coupled via a rotary mechanism of the central stalk subunits to proton translocation. Functionally, component of the F(0) channel, it forms part of the peripheral stalk, linking F(1) to F(0). The chain is ATP synthase subunit b, sodium ion specific (atpF) from Ilyobacter tartaricus.